A 165-amino-acid polypeptide reads, in one-letter code: Probable deoxyuridine 5'-triphosphate nucleotidohydrolase (165 aa).

Residues 39–49 (GRIDTDGKTIG) are compositionally biased toward basic and acidic residues. The disordered stretch occupies residues 39-64 (GRIDTDGKTIGDRSPVTPTADEDSTD).

This sequence belongs to the dCTP deaminase family. Archaeal dUTPase subfamily.

The enzyme catalyses dUTP + H2O = dUMP + diphosphate + H(+). Its pathway is pyrimidine metabolism; dUMP biosynthesis; dUMP from dCTP (dUTP route): step 2/2. Its function is as follows. This enzyme is involved in nucleotide metabolism: it produces dUMP, the immediate precursor of thymidine nucleotides and it decreases the intracellular concentration of dUTP so that uracil cannot be incorporated into DNA. The chain is Probable deoxyuridine 5'-triphosphate nucleotidohydrolase from Halobacterium salinarum (strain ATCC 29341 / DSM 671 / R1).